The chain runs to 150 residues: Lipoprotein signal peptidase (150 aa).

Transmembrane regions (helical) follow at residues 8–28, 58–78, and 81–101; these read FYAL…LAHA, GFSW…GWFL, and TTGS…NVFD. Residues aspartate 116 and aspartate 132 contribute to the active site. The chain crosses the membrane as a helical span at residues 126 to 146; that stretch reads VVFNIADLFILAGVFGTFLFL.

It belongs to the peptidase A8 family.

It localises to the cell membrane. It catalyses the reaction Release of signal peptides from bacterial membrane prolipoproteins. Hydrolyzes -Xaa-Yaa-Zaa-|-(S,diacylglyceryl)Cys-, in which Xaa is hydrophobic (preferably Leu), and Yaa (Ala or Ser) and Zaa (Gly or Ala) have small, neutral side chains.. The protein operates within protein modification; lipoprotein biosynthesis (signal peptide cleavage). This protein specifically catalyzes the removal of signal peptides from prolipoproteins. This Tropheryma whipplei (strain Twist) (Whipple's bacillus) protein is Lipoprotein signal peptidase.